The primary structure comprises 395 residues: Zinc-regulated GTPase metalloprotein activator 1B (395 aa).

The segment at 1 to 36 is disordered; it reads MLPAVGSADEEEDPAEEDCPELVPMETTQSEEEEKS. Over residues 8–20 the composition is skewed to acidic residues; the sequence is ADEEEDPAEEDCP. The psi-PxLVp motif signature appears at 17–24; that stretch reads EDCPELVP. Position 49 to 56 (49 to 56) interacts with GTP; sequence GYLGAGKT. Positions 107, 109, and 110 each coordinate Zn(2+). A CXCC motif motif is present at residues 107–110; it reads CLCC. GTP is bound by residues 110–114 and 203–206; these read CSVKD and NKTD. The 104-residue stretch at 274–377 folds into the CobW C-terminal domain; it reads IVTITFEVPG…ILKQLFIATV (104 aa).

Belongs to the SIMIBI class G3E GTPase family. ZNG1 subfamily.

The protein localises to the nucleus. It carries out the reaction GTP + H2O = GDP + phosphate + H(+). Functionally, zinc chaperone that directly transfers zinc cofactor to target metalloproteins, thereby activating them. Catalyzes zinc insertion into the active site of methionine aminopeptidase METAP1, which function to cleave the initiator methionine from polypeptides during or after protein translation. Mechanistically, the N-terminal psi-PxLVp motif binds to the C6H2-type zinc finger of inactive form of METAP1. After formation of the docked complex, zinc is transferred from the CXCC motif in the GTPase domain of ZNG1B to the zinc binding site in the peptidase domain of METAP1 in a process requiring GTP hydrolysis. GTP/GDP exchange is required for release of active METAP1. This is Zinc-regulated GTPase metalloprotein activator 1B from Homo sapiens (Human).